We begin with the raw amino-acid sequence, 508 residues long: Photosystem II CP47 reaction center protein (508 aa).

Helical transmembrane passes span 21 to 36, 101 to 115, 140 to 156, 203 to 218, 237 to 252, and 457 to 472; these read SVHI…WAGS, IILA…MWHW, GIHL…FGAF, IAAG…FHLS, VLSS…AFVV, and CFAL…HGAR.

This sequence belongs to the PsbB/PsbC family. PsbB subfamily. As to quaternary structure, PSII is composed of 1 copy each of membrane proteins PsbA, PsbB, PsbC, PsbD, PsbE, PsbF, PsbH, PsbI, PsbJ, PsbK, PsbL, PsbM, PsbT, PsbX, PsbY, PsbZ, Psb30/Ycf12, at least 3 peripheral proteins of the oxygen-evolving complex and a large number of cofactors. It forms dimeric complexes. Binds multiple chlorophylls. PSII binds additional chlorophylls, carotenoids and specific lipids. serves as cofactor.

It localises to the plastid. The protein resides in the chloroplast thylakoid membrane. One of the components of the core complex of photosystem II (PSII). It binds chlorophyll and helps catalyze the primary light-induced photochemical processes of PSII. PSII is a light-driven water:plastoquinone oxidoreductase, using light energy to abstract electrons from H(2)O, generating O(2) and a proton gradient subsequently used for ATP formation. The chain is Photosystem II CP47 reaction center protein from Mesostigma viride (Green alga).